We begin with the raw amino-acid sequence, 373 residues long: ATP phosphoribosyltransferase regulatory subunit (373 aa).

This sequence belongs to the class-II aminoacyl-tRNA synthetase family. HisZ subfamily. In terms of assembly, heteromultimer composed of HisG and HisZ subunits.

The protein resides in the cytoplasm. It functions in the pathway amino-acid biosynthesis; L-histidine biosynthesis; L-histidine from 5-phospho-alpha-D-ribose 1-diphosphate: step 1/9. Its function is as follows. Required for the first step of histidine biosynthesis. May allow the feedback regulation of ATP phosphoribosyltransferase activity by histidine. The protein is ATP phosphoribosyltransferase regulatory subunit of Rhizobium etli (strain ATCC 51251 / DSM 11541 / JCM 21823 / NBRC 15573 / CFN 42).